A 44-amino-acid polypeptide reads, in one-letter code: Protein PsbN (44 aa).

A helical membrane pass occupies residues 6–26 (FFFTIFLWCLLLSVTGYSVYV).

This sequence belongs to the PsbN family.

Its subcellular location is the plastid. It localises to the chloroplast thylakoid membrane. Functionally, may play a role in photosystem I and II biogenesis. This chain is Protein PsbN, found in Oltmannsiellopsis viridis (Marine flagellate).